We begin with the raw amino-acid sequence, 486 residues long: MQDKVLTDLIKTEKPEQIEDFLPNEEDITSPTITRNLYVESYGCQMNIADSEVVVSILRPHGFEITDTYEKADVIFINTCAIRDKAEQTVRKRLSQFNQLKRRNPDLVIGVLGCMAERLKQTLLEEEKLVDLVAGPDAYRDLPRLLATVDSGHKAINTFLSREETYADISPIRLNSNGVSAFISIMRGCDNMCSFCVVPFTRGRERSRDPYSIVKEATELFEQGYREVTLLGQNVDSYKWSPNTDKKEQPTTPQEGVVNFAQLLAMVAQIHPDLRIRFSTSHPKDITDQVLYTIKAYDNICKYIHLPVQSGSSRVLKLMNRTYDRAWYLQKIEDIRRIVGEDCGISSDMIAGFCTETEEDHQDTLSLMEHIKYEFSYMFYYSERPGTLAARKYADDVPLAVKKRRLQEIIDKQRQHSFEKNLKDIGKVYQVLVEGPSKKSDIEWQGRNSANKVVVFPNVDCKKGTYVDVLITNCTTGTLLGEICTR.

The MTTase N-terminal domain occupies Arg35–Ser151. [4Fe-4S] cluster contacts are provided by Cys44, Cys80, Cys114, Cys189, Cys193, and Cys196. The region spanning Asn175–Glu419 is the Radical SAM core domain. Positions Leu422–Thr485 constitute a TRAM domain.

It belongs to the methylthiotransferase family. MiaB subfamily. In terms of assembly, monomer. The cofactor is [4Fe-4S] cluster.

It is found in the cytoplasm. The catalysed reaction is N(6)-dimethylallyladenosine(37) in tRNA + (sulfur carrier)-SH + AH2 + 2 S-adenosyl-L-methionine = 2-methylsulfanyl-N(6)-dimethylallyladenosine(37) in tRNA + (sulfur carrier)-H + 5'-deoxyadenosine + L-methionine + A + S-adenosyl-L-homocysteine + 2 H(+). Catalyzes the methylthiolation of N6-(dimethylallyl)adenosine (i(6)A), leading to the formation of 2-methylthio-N6-(dimethylallyl)adenosine (ms(2)i(6)A) at position 37 in tRNAs that read codons beginning with uridine. The chain is tRNA-2-methylthio-N(6)-dimethylallyladenosine synthase from Amoebophilus asiaticus (strain 5a2).